We begin with the raw amino-acid sequence, 78 residues long: MSAICQVTGRQPGYGKSVSHSHRRTSRRWNPNVQRRKFYLPSEGRTITLNVSTKGLKVIDRDGIESVVAKIRARGEKI.

Residues 1-28 (MSAICQVTGRQPGYGKSVSHSHRRTSRR) are disordered.

It belongs to the bacterial ribosomal protein bL28 family.

In Corynebacterium diphtheriae (strain ATCC 700971 / NCTC 13129 / Biotype gravis), this protein is Large ribosomal subunit protein bL28.